Reading from the N-terminus, the 1035-residue chain is Protein hir-1 (1035 aa).

7 WD repeats span residues Gln-15–Asp-54, His-68–Thr-107, Gly-129–Thr-168, Val-171–Thr-210, Pro-232–Asn-275, Asp-299–Ile-338, and Ile-342–Lys-383. Positions Lys-393–Ala-479 are disordered. Positions Asp-408–Glu-425 are enriched in basic and acidic residues.

It belongs to the WD repeat HIR1 family.

The protein resides in the nucleus. Required for replication-independent chromatin assembly and for the periodic repression of histone gene transcription during the cell cycle. The polypeptide is Protein hir-1 (hir-1) (Neurospora crassa (strain ATCC 24698 / 74-OR23-1A / CBS 708.71 / DSM 1257 / FGSC 987)).